Here is a 294-residue protein sequence, read N- to C-terminus: Bifunctional protein FolD (294 aa).

Residues 175-177 and Ile243 each bind NADP(+); that span reads GVS.

This sequence belongs to the tetrahydrofolate dehydrogenase/cyclohydrolase family. Homodimer.

It carries out the reaction (6R)-5,10-methylene-5,6,7,8-tetrahydrofolate + NADP(+) = (6R)-5,10-methenyltetrahydrofolate + NADPH. The catalysed reaction is (6R)-5,10-methenyltetrahydrofolate + H2O = (6R)-10-formyltetrahydrofolate + H(+). It functions in the pathway one-carbon metabolism; tetrahydrofolate interconversion. Its function is as follows. Catalyzes the oxidation of 5,10-methylenetetrahydrofolate to 5,10-methenyltetrahydrofolate and then the hydrolysis of 5,10-methenyltetrahydrofolate to 10-formyltetrahydrofolate. The polypeptide is Bifunctional protein FolD (Xanthomonas campestris pv. campestris (strain 8004)).